The primary structure comprises 143 residues: Large ribosomal subunit protein uL13 (143 aa).

Belongs to the universal ribosomal protein uL13 family. As to quaternary structure, part of the 50S ribosomal subunit.

In terms of biological role, this protein is one of the early assembly proteins of the 50S ribosomal subunit, although it is not seen to bind rRNA by itself. It is important during the early stages of 50S assembly. The chain is Large ribosomal subunit protein uL13 from Natranaerobius thermophilus (strain ATCC BAA-1301 / DSM 18059 / JW/NM-WN-LF).